Reading from the N-terminus, the 757-residue chain is Polyribonucleotide nucleotidyltransferase (757 aa).

Mg(2+) is bound by residues Asp532 and Asp538. Residues 598-657 (PRVTAIKVPVDKIGEVIGPKGKMINSITEQTGANISIEDDGTVFVGATDGPSAQAAIDMI) enclose the KH domain. Residues 669–738 (GERFLGTVVK…NRGKISLIPV (70 aa)) form the S1 motif domain.

The protein belongs to the polyribonucleotide nucleotidyltransferase family. Requires Mg(2+) as cofactor.

The protein resides in the cytoplasm. The catalysed reaction is RNA(n+1) + phosphate = RNA(n) + a ribonucleoside 5'-diphosphate. Functionally, involved in mRNA degradation. Catalyzes the phosphorolysis of single-stranded polyribonucleotides processively in the 3'- to 5'-direction. In Rhodococcus jostii (strain RHA1), this protein is Polyribonucleotide nucleotidyltransferase.